A 484-amino-acid chain; its full sequence is ATP synthase subunit beta (484 aa).

An ATP-binding site is contributed by 169–176; that stretch reads GGAGVGKT.

It belongs to the ATPase alpha/beta chains family. In terms of assembly, F-type ATPases have 2 components, CF(1) - the catalytic core - and CF(0) - the membrane proton channel. CF(1) has five subunits: alpha(3), beta(3), gamma(1), delta(1), epsilon(1). CF(0) has three main subunits: a(1), b(2) and c(9-12). The alpha and beta chains form an alternating ring which encloses part of the gamma chain. CF(1) is attached to CF(0) by a central stalk formed by the gamma and epsilon chains, while a peripheral stalk is formed by the delta and b chains.

The protein resides in the cell membrane. The enzyme catalyses ATP + H2O + 4 H(+)(in) = ADP + phosphate + 5 H(+)(out). Its function is as follows. Produces ATP from ADP in the presence of a proton gradient across the membrane. The catalytic sites are hosted primarily by the beta subunits. The sequence is that of ATP synthase subunit beta from Cutibacterium acnes (strain DSM 16379 / KPA171202) (Propionibacterium acnes).